The sequence spans 105 residues: MNRLKKGDDVIVIAGKDKGRRGVVKSFAKGGSLVLVEGINIVKKHVKPNPNRGVEGGVVEKELPVDASNVAIFNPATEKADRVGYKFVDEKKVRYFKSNGELVDL.

Belongs to the universal ribosomal protein uL24 family. Part of the 50S ribosomal subunit.

One of two assembly initiator proteins, it binds directly to the 5'-end of the 23S rRNA, where it nucleates assembly of the 50S subunit. In terms of biological role, one of the proteins that surrounds the polypeptide exit tunnel on the outside of the subunit. In Francisella philomiragia subsp. philomiragia (strain ATCC 25017 / CCUG 19701 / FSC 153 / O#319-036), this protein is Large ribosomal subunit protein uL24.